Consider the following 157-residue polypeptide: Vitamin K-dependent protein C (157 aa).

The Peptidase S1 domain occupies 1–157; that stretch reads ENGEVDLDIQ…GCGRLHNYGV (157 aa). The N-linked (GlcNAc...) asparagine glycan is linked to asparagine 17. Aspartate 26 acts as the Charge relay system in catalysis. A glycan (N-linked (GlcNAc...) asparagine) is linked at asparagine 78. 2 cysteine pairs are disulfide-bonded: cysteine 96–cysteine 110 and cysteine 121–cysteine 149. Catalysis depends on serine 125, which acts as the Charge relay system.

It belongs to the peptidase S1 family. In terms of tissue distribution, plasma; synthesized in the liver.

Its subcellular location is the secreted. The protein localises to the golgi apparatus. It localises to the endoplasmic reticulum. It catalyses the reaction Degradation of blood coagulation factors Va and VIIIa.. Its function is as follows. Protein C is a vitamin K-dependent serine protease that regulates blood coagulation by inactivating factors Va and VIIIa in the presence of calcium ions and phospholipids. Exerts a protective effect on the endothelial cell barrier function. This is Vitamin K-dependent protein C (PROC) from Equus caballus (Horse).